Consider the following 407-residue polypeptide: UDP-N-acetylglucosamine--N-acetylmuramyl-(pentapeptide) pyrophosphoryl-undecaprenol N-acetylglucosamine transferase (407 aa).

Residues Met-1 to Ala-21 form a disordered region. UDP-N-acetyl-alpha-D-glucosamine-binding positions include Thr-38–Gly-40, Asn-157, Ser-228, and Gln-324.

This sequence belongs to the glycosyltransferase 28 family. MurG subfamily.

It is found in the cell membrane. It carries out the reaction di-trans,octa-cis-undecaprenyl diphospho-N-acetyl-alpha-D-muramoyl-L-alanyl-D-glutamyl-meso-2,6-diaminopimeloyl-D-alanyl-D-alanine + UDP-N-acetyl-alpha-D-glucosamine = di-trans,octa-cis-undecaprenyl diphospho-[N-acetyl-alpha-D-glucosaminyl-(1-&gt;4)]-N-acetyl-alpha-D-muramoyl-L-alanyl-D-glutamyl-meso-2,6-diaminopimeloyl-D-alanyl-D-alanine + UDP + H(+). The protein operates within cell wall biogenesis; peptidoglycan biosynthesis. Cell wall formation. Catalyzes the transfer of a GlcNAc subunit on undecaprenyl-pyrophosphoryl-MurNAc-pentapeptide (lipid intermediate I) to form undecaprenyl-pyrophosphoryl-MurNAc-(pentapeptide)GlcNAc (lipid intermediate II). This is UDP-N-acetylglucosamine--N-acetylmuramyl-(pentapeptide) pyrophosphoryl-undecaprenol N-acetylglucosamine transferase from Mycobacterium leprae (strain TN).